A 362-amino-acid chain; its full sequence is B3 domain-containing protein IDEF1 (362 aa).

Residues 30–91 form a disordered region; that stretch reads VPFPNPFPAP…TPTPTPRGFA (62 aa). Over residues 48-70 the composition is skewed to basic residues; sequence PHNHNHNHNHNHNIHNSHNHNHN. Residues 253-355 constitute a DNA-binding region (TF-B3); the sequence is LRKELTKSDV…KFIIRGEKAI (103 aa).

In terms of processing, polyubiquitinated. Ubiquitination leads to its subsequent degradation via the proteasome pathway. Expressed in roots.

Its subcellular location is the nucleus. In terms of biological role, transcription regulator involved in iron deficiency response and tolerance. May regulate directly iron transporters or other transcription factors involved in iron-deficiency response. Binds specifically to the DNA sequence 5'-CATGC-3' of the IDE1 element found in the promoter of the barley iron deficiency-inducible gene IDS2. The protein is B3 domain-containing protein IDEF1 (IDEF1) of Oryza sativa subsp. japonica (Rice).